The chain runs to 565 residues: Maturase K (565 aa).

The protein belongs to the intron maturase 2 family. MatK subfamily.

It is found in the plastid. Its subcellular location is the chloroplast. Usually encoded in the trnK tRNA gene intron. Probably assists in splicing its own and other chloroplast group II introns. The sequence is that of Maturase K from Staurastrum punctulatum (Green alga).